The chain runs to 60 residues: UPF0434 protein NMCC_0628 (60 aa).

The protein belongs to the UPF0434 family.

This Neisseria meningitidis serogroup C (strain 053442) protein is UPF0434 protein NMCC_0628.